Consider the following 249-residue polypeptide: Putative ABC transporter ATP-binding protein GSU1281 (249 aa).

The 231-residue stretch at 6-236 (VEVRDLCHCY…DELLATCRLE (231 aa)) folds into the ABC transporter domain. 39 to 46 (GANGAGKS) is an ATP binding site.

Belongs to the ABC transporter superfamily.

The protein resides in the cell inner membrane. Probably part of an ABC transporter complex. Responsible for energy coupling to the transport system. The sequence is that of Putative ABC transporter ATP-binding protein GSU1281 from Geobacter sulfurreducens (strain ATCC 51573 / DSM 12127 / PCA).